A 321-amino-acid polypeptide reads, in one-letter code: Viral T-cell receptor beta chain-like T17T-22 (321 aa).

A signal peptide spans 1–28 (MISWLPSVAMGSRLLCCVALCLLGAGPA). The interval 29–122 (DSGLTQTPRH…DSALYLCASS (94 aa)) is v segment. Residue Asn105 is glycosylated (N-linked (GlcNAc...) asparagine; by host). The segment at 123-128 (PNEDSE) is d segment. A j segment region spans residues 129 to 144 (YGETLYFGEGSRLTVV). The segment at 145-321 (EDLKKVSPPK…LMAKVKRKDS (177 aa)) is c region. 2 N-linked (GlcNAc...) asparagine; by host glycosylation sites follow: Asn214 and Asn264.

This Feline leukemia virus protein is Viral T-cell receptor beta chain-like T17T-22 (V-TCR).